The sequence spans 496 residues: MAATGVLAEIIDGDVYKYYADGEWKKSTSGKSVAIINPTTRKPQYKVQACSQEEVNKVMDSAKSAQKSWAKTPLWKRAELLHKAAAILKEHKAAIAECLVKEIAKPAKDAVTEVVRSGDLVSYCAEEGVRILGEGKFLVSDSFPGNERTKYCLTSKIPLGVILAIPPFNYPVNLAVSKIAPALIAGNSIVLKPPTQGAVAALHMVHCFHLAGFPKGLISCVTGKGSEIGDFLTMHPGVNCISFTGGDTGIAISKKSGMIPLQMELGGKDACIVLEDADLDLVAANIIKGGFSYSGQRCTAVKVVLVMESVADALVEKVKVKVAKLSVGPPEDDSDITPVVSESSANFIEGLVNDAKEKGATFCQEYKREGNLIWPLLLDNVRPDMRIAWEEPFGPVLPVIRINSVEEGIHHCNASNFGLQGCVFTKDINKAIMISDAMESGTVQINSAPARGPDHFPFQGIKDSGIGSQGITNSINMMTKVKTTVINLPSPSYTMG.

Substrate contacts are provided by residues Arg116 and 169-170 (NY). 3 residues coordinate NADP(+): Lys192, Thr195, and Asp230. NAD(+) is bound at residue 245–249 (GGDTG). Glu264 functions as the Proton acceptor in the catalytic mechanism. 297 to 299 (RCT) contacts substrate. The Nucleophile role is filled by Cys298. NADP(+) is bound at residue Glu391. Arg451 is a substrate binding site.

It belongs to the aldehyde dehydrogenase family.

The protein localises to the cytoplasm. It catalyses the reaction D-glyceraldehyde 3-phosphate + NADP(+) + H2O = (2R)-3-phosphoglycerate + NADPH + 2 H(+). Its function is as follows. Important as a means of generating NADPH for biosynthetic reactions. The protein is NADP-dependent glyceraldehyde-3-phosphate dehydrogenase (GAPN) of Pisum sativum (Garden pea).